The following is a 131-amino-acid chain: Translation initiation factor 5A (131 aa).

A Hypusine modification is found at Lys-37.

It belongs to the eIF-5A family.

The protein localises to the cytoplasm. Functionally, functions by promoting the formation of the first peptide bond. This chain is Translation initiation factor 5A (eIF5A), found in Methanococcus maripaludis (strain C6 / ATCC BAA-1332).